The following is a 221-amino-acid chain: MNVGVIVFPGSNCDRDVQWVTAGLLGQSTRMIWHEERDLSGLDLIVVPGGFSYGDYLRCGAIARFSPAMQATVAFAEAGGLVLGICNGFQILTEVGLLPGALVRNRDLHFRCETTPLRVERSDRPWSRTYQQGQILNLPIAHGEGRYHADPATLAALEANGQVLFRYLDNPNGSCNDIAGITNVAGNVLGMMPHPERAAEAIAGSVDGLGLFAGLLEPVAA.

In terms of domain architecture, Glutamine amidotransferase type-1 spans 2 to 221 (NVGVIVFPGS…FAGLLEPVAA (220 aa)). Cys86 acts as the Nucleophile in catalysis. Residues His194 and Glu196 contribute to the active site.

In terms of assembly, part of the FGAM synthase complex composed of 1 PurL, 1 PurQ and 2 PurS subunits.

Its subcellular location is the cytoplasm. The catalysed reaction is N(2)-formyl-N(1)-(5-phospho-beta-D-ribosyl)glycinamide + L-glutamine + ATP + H2O = 2-formamido-N(1)-(5-O-phospho-beta-D-ribosyl)acetamidine + L-glutamate + ADP + phosphate + H(+). It carries out the reaction L-glutamine + H2O = L-glutamate + NH4(+). It functions in the pathway purine metabolism; IMP biosynthesis via de novo pathway; 5-amino-1-(5-phospho-D-ribosyl)imidazole from N(2)-formyl-N(1)-(5-phospho-D-ribosyl)glycinamide: step 1/2. Functionally, part of the phosphoribosylformylglycinamidine synthase complex involved in the purines biosynthetic pathway. Catalyzes the ATP-dependent conversion of formylglycinamide ribonucleotide (FGAR) and glutamine to yield formylglycinamidine ribonucleotide (FGAM) and glutamate. The FGAM synthase complex is composed of three subunits. PurQ produces an ammonia molecule by converting glutamine to glutamate. PurL transfers the ammonia molecule to FGAR to form FGAM in an ATP-dependent manner. PurS interacts with PurQ and PurL and is thought to assist in the transfer of the ammonia molecule from PurQ to PurL. This Synechococcus sp. (strain ATCC 27144 / PCC 6301 / SAUG 1402/1) (Anacystis nidulans) protein is Phosphoribosylformylglycinamidine synthase subunit PurQ.